Reading from the N-terminus, the 203-residue chain is MEECKGGGMSPSSSMDSSTHPALSTTSSAATARRDLSTDLRLGLSLSTSSSSSLLQAAAAAAAADDSIPSTPRNSQVHADWPPIKPFLRSALQKASAAGGGGARRRRTLFVKVYMEGVPIGRKLDLLLLDGYDSLLIKLCHMFKTPITYADVMECHQQVPGQKAAHVLTYEDQDGDWMMVGDVPWELFLSSVKKLRIARMDKC.

Residues 1-31 are disordered; that stretch reads MEECKGGGMSPSSSMDSSTHPALSTTSSAAT. Residues 10-31 are compositionally biased toward low complexity; it reads SPSSSMDSSTHPALSTTSSAAT. Positions 40–44 match the EAR-like (transcriptional repression) motif; the sequence is LRLGL. The PB1 domain maps to 108-202; sequence TLFVKVYMEG…KKLRIARMDK (95 aa).

This sequence belongs to the Aux/IAA family. As to quaternary structure, homodimers and heterodimers.

The protein resides in the nucleus. In terms of biological role, aux/IAA proteins are short-lived transcriptional factors that function as repressors of early auxin response genes at low auxin concentrations. This Oryza sativa subsp. japonica (Rice) protein is Auxin-responsive protein IAA4 (IAA4).